Reading from the N-terminus, the 640-residue chain is Threonine--tRNA ligase (640 aa).

The TGS domain maps to 1-61; it reads MPIITLPNGD…TEDSTLQIIT (61 aa). The tract at residues 242–533 is catalytic; the sequence is DHRKIGKALD…LIEHYAGFMP (292 aa). Zn(2+) contacts are provided by Cys333, His384, and His510.

The protein belongs to the class-II aminoacyl-tRNA synthetase family. As to quaternary structure, homodimer. Requires Zn(2+) as cofactor.

The protein resides in the cytoplasm. It carries out the reaction tRNA(Thr) + L-threonine + ATP = L-threonyl-tRNA(Thr) + AMP + diphosphate + H(+). Its function is as follows. Catalyzes the attachment of threonine to tRNA(Thr) in a two-step reaction: L-threonine is first activated by ATP to form Thr-AMP and then transferred to the acceptor end of tRNA(Thr). Also edits incorrectly charged L-seryl-tRNA(Thr). The protein is Threonine--tRNA ligase of Acinetobacter baumannii (strain SDF).